Reading from the N-terminus, the 513-residue chain is GMP synthase [glutamine-hydrolyzing] (513 aa).

One can recognise a Glutamine amidotransferase type-1 domain in the interval 8–198 (KIIVLDYGSQ…ALNTCGAKGN (191 aa)). The Nucleophile role is filled by C85. Catalysis depends on residues H172 and E174. The GMPS ATP-PPase domain occupies 199–388 (WSMENFIDMQ…LGMPDEIVWR (190 aa)). 226 to 232 (SGGVDSS) contributes to the ATP binding site.

As to quaternary structure, homodimer.

The enzyme catalyses XMP + L-glutamine + ATP + H2O = GMP + L-glutamate + AMP + diphosphate + 2 H(+). It participates in purine metabolism; GMP biosynthesis; GMP from XMP (L-Gln route): step 1/1. Catalyzes the synthesis of GMP from XMP. In Lactococcus lactis subsp. cremoris (strain SK11), this protein is GMP synthase [glutamine-hydrolyzing].